Here is a 351-residue protein sequence, read N- to C-terminus: Photosystem II D2 protein (351 aa).

A helical transmembrane segment spans residues 39-59 (CAFLALGGWLTGTTFVTSWYT). His116 contributes to the chlorophyll a binding site. The helical transmembrane segment at 123–139 (GFMLRQFEIARLVGIRP) threads the bilayer. Pheophytin a is bound by residues Gln128 and Asn141. Residues 151-164 (VFVSVFLMYPLGQS) traverse the membrane as a helical segment. His196 serves as a coordination point for chlorophyll a. The chain crosses the membrane as a helical span at residues 206 to 226 (GALLCAIHGATVENTLFEDGE). A plastoquinone is bound by residues His213 and Phe260. Position 213 (His213) interacts with Fe cation. Position 267 (His267) interacts with Fe cation. A helical transmembrane segment spans residues 277-293 (GLWMSAVGIVGLALNLR).

This sequence belongs to the reaction center PufL/M/PsbA/D family. As to quaternary structure, PSII is composed of 1 copy each of membrane proteins PsbA, PsbB, PsbC, PsbD, PsbE, PsbF, PsbH, PsbI, PsbJ, PsbK, PsbL, PsbM, PsbT, PsbX, PsbY, PsbZ, Psb30/Ycf12, peripheral proteins PsbO, CyanoQ (PsbQ), PsbU, PsbV and a large number of cofactors. It forms dimeric complexes. Requires The D1/D2 heterodimer binds P680, chlorophylls that are the primary electron donor of PSII, and subsequent electron acceptors. It shares a non-heme iron and each subunit binds pheophytin, quinone, additional chlorophylls, carotenoids and lipids. There is also a Cl(-1) ion associated with D1 and D2, which is required for oxygen evolution. The PSII complex binds additional chlorophylls, carotenoids and specific lipids. as cofactor.

It is found in the cellular thylakoid membrane. The catalysed reaction is 2 a plastoquinone + 4 hnu + 2 H2O = 2 a plastoquinol + O2. Its function is as follows. Photosystem II (PSII) is a light-driven water:plastoquinone oxidoreductase that uses light energy to abstract electrons from H(2)O, generating O(2) and a proton gradient subsequently used for ATP formation. It consists of a core antenna complex that captures photons, and an electron transfer chain that converts photonic excitation into a charge separation. The D1/D2 (PsbA/PsbD) reaction center heterodimer binds P680, the primary electron donor of PSII as well as several subsequent electron acceptors. D2 is needed for assembly of a stable PSII complex. The chain is Photosystem II D2 protein from Trichormus variabilis (strain ATCC 29413 / PCC 7937) (Anabaena variabilis).